The sequence spans 309 residues: Thioredoxin reductase (309 aa).

E35–K42 lines the FAD pocket. A disulfide bridge links C134 with C137. D277 to I286 lines the FAD pocket.

Belongs to the class-II pyridine nucleotide-disulfide oxidoreductase family. As to quaternary structure, homodimer. FAD is required as a cofactor.

It localises to the cytoplasm. It catalyses the reaction [thioredoxin]-dithiol + NADP(+) = [thioredoxin]-disulfide + NADPH + H(+). This Ureaplasma parvum serovar 3 (strain ATCC 700970) protein is Thioredoxin reductase (trxB).